The following is a 171-amino-acid chain: ATP synthase subunit b (171 aa).

A helical membrane pass occupies residues 26-46 (INLVLVIALLVYFLKGFLGGI).

This sequence belongs to the ATPase B chain family. In terms of assembly, F-type ATPases have 2 components, F(1) - the catalytic core - and F(0) - the membrane proton channel. F(1) has five subunits: alpha(3), beta(3), gamma(1), delta(1), epsilon(1). F(0) has four main subunits: a(1), b(1), b'(1) and c(10-14). The alpha and beta chains form an alternating ring which encloses part of the gamma chain. F(1) is attached to F(0) by a central stalk formed by the gamma and epsilon chains, while a peripheral stalk is formed by the delta, b and b' chains.

The protein localises to the cellular thylakoid membrane. Functionally, f(1)F(0) ATP synthase produces ATP from ADP in the presence of a proton or sodium gradient. F-type ATPases consist of two structural domains, F(1) containing the extramembraneous catalytic core and F(0) containing the membrane proton channel, linked together by a central stalk and a peripheral stalk. During catalysis, ATP synthesis in the catalytic domain of F(1) is coupled via a rotary mechanism of the central stalk subunits to proton translocation. Component of the F(0) channel, it forms part of the peripheral stalk, linking F(1) to F(0). This chain is ATP synthase subunit b, found in Synechococcus sp. (strain RCC307).